Consider the following 149-residue polypeptide: Transcriptional repressor NrdR (149 aa).

Residues 3-34 (CPFCSENDTKVIDSRLVADGHQVRRRRQCLAC) fold into a zinc finger. One can recognise an ATP-cone domain in the interval 49-139 (PKVIKSNGNR…VYRSFEDIRE (91 aa)).

Belongs to the NrdR family. The cofactor is Zn(2+).

Functionally, negatively regulates transcription of bacterial ribonucleotide reductase nrd genes and operons by binding to NrdR-boxes. The sequence is that of Transcriptional repressor NrdR from Vibrio vulnificus (strain YJ016).